Consider the following 207-residue polypeptide: Mediator of RNA polymerase II transcription subunit 21 (207 aa).

Positions 37–121 are disordered; it reads PHPDVPDAAP…PDSPRTFASR (85 aa). Residues 65 to 80 show a composition bias toward low complexity; sequence PVPAQSQASPPAQNPA. The span at 84–96 shows a compositional bias: gly residues; sequence AGAGTSVGEGGQT. The segment covering 97–108 has biased composition (low complexity); it reads PGPAAGAGADPN. The stretch at 146–196 forms a coiled coil; the sequence is IDSSEAEQEKRIRELEGELRRVEEERELKMRELKRLRRTLENVLRAVETGL.

The protein belongs to the Mediator complex subunit 21 family. In terms of assembly, component of the Mediator complex.

It localises to the nucleus. Component of the Mediator complex, a coactivator involved in the regulated transcription of nearly all RNA polymerase II-dependent genes. Mediator functions as a bridge to convey information from gene-specific regulatory proteins to the basal RNA polymerase II transcription machinery. Mediator is recruited to promoters by direct interactions with regulatory proteins and serves as a scaffold for the assembly of a functional preinitiation complex with RNA polymerase II and the general transcription factors. This is Mediator of RNA polymerase II transcription subunit 21 (srb7) from Neosartorya fischeri (strain ATCC 1020 / DSM 3700 / CBS 544.65 / FGSC A1164 / JCM 1740 / NRRL 181 / WB 181) (Aspergillus fischerianus).